The sequence spans 704 residues: Polyribonucleotide nucleotidyltransferase (704 aa).

The Mg(2+) site is built by Asp487 and Asp493. The region spanning 554–613 is the KH domain; that stretch reads PRLLTIKIHPDKIREVIGKGGSTIQAITKETGTQIDIQDDGTIIIASVNAIAAQAAKSRI. In terms of domain architecture, S1 motif spans 623–691; sequence GRIYEGKVAK…KQGRIRLSIK (69 aa).

It belongs to the polyribonucleotide nucleotidyltransferase family. In terms of assembly, component of the RNA degradosome, which is a multiprotein complex involved in RNA processing and mRNA degradation. Requires Mg(2+) as cofactor.

It localises to the cytoplasm. It catalyses the reaction RNA(n+1) + phosphate = RNA(n) + a ribonucleoside 5'-diphosphate. Functionally, involved in mRNA degradation. Catalyzes the phosphorolysis of single-stranded polyribonucleotides processively in the 3'- to 5'-direction. In Xanthomonas oryzae pv. oryzae (strain MAFF 311018), this protein is Polyribonucleotide nucleotidyltransferase.